A 127-amino-acid polypeptide reads, in one-letter code: uncharacterized protein (127 aa).

Residues 1–16 (MIKKIIFGIAILLSTS) form the signal peptide. Cysteine 17 carries N-palmitoyl cysteine lipidation. Cysteine 17 carries S-diacylglycerol cysteine lipidation. Positions 56–101 (EVREEIQKYRVAIVKINKKKRELYNRLSKEAQNFLAEQQKYKQKLS) form a coiled coil. Residues 107–118 (VENDQKNNTADS) show a composition bias toward polar residues. Positions 107 to 127 (VENDQKNNTADSNDNKSKDTK) are disordered.

Its subcellular location is the cell membrane. This is an uncharacterized protein from Rickettsia conorii (strain ATCC VR-613 / Malish 7).